Consider the following 577-residue polypeptide: Arginine--tRNA ligase (577 aa).

The short motif at 122-132 is the 'HIGH' region element; the sequence is PNVAKEMHVGH.

Belongs to the class-I aminoacyl-tRNA synthetase family. Monomer.

The protein resides in the cytoplasm. The catalysed reaction is tRNA(Arg) + L-arginine + ATP = L-arginyl-tRNA(Arg) + AMP + diphosphate. This is Arginine--tRNA ligase from Klebsiella pneumoniae subsp. pneumoniae (strain ATCC 700721 / MGH 78578).